Here is a 55-residue protein sequence, read N- to C-terminus: Large ribosomal subunit protein bL33 (55 aa).

Belongs to the bacterial ribosomal protein bL33 family.

The chain is Large ribosomal subunit protein bL33 from Maricaulis maris (strain MCS10) (Caulobacter maris).